Here is a 581-residue protein sequence, read N- to C-terminus: Threonine--tRNA ligase (581 aa).

Residues 185-478 (DHRKLGKELD…LVEHYGGAFP (294 aa)) are catalytic. Zn(2+) is bound by residues cysteine 278, histidine 329, and histidine 455.

It belongs to the class-II aminoacyl-tRNA synthetase family. As to quaternary structure, homodimer. The cofactor is Zn(2+).

The protein resides in the cytoplasm. It carries out the reaction tRNA(Thr) + L-threonine + ATP = L-threonyl-tRNA(Thr) + AMP + diphosphate + H(+). Catalyzes the attachment of threonine to tRNA(Thr) in a two-step reaction: L-threonine is first activated by ATP to form Thr-AMP and then transferred to the acceptor end of tRNA(Thr). Also edits incorrectly charged L-seryl-tRNA(Thr). The sequence is that of Threonine--tRNA ligase from Borreliella burgdorferi (strain ATCC 35210 / DSM 4680 / CIP 102532 / B31) (Borrelia burgdorferi).